A 383-amino-acid polypeptide reads, in one-letter code: Succinate--CoA ligase [ADP-forming] subunit beta 2 (383 aa).

The ATP-grasp domain maps to 9–231 (RELFKEHGIV…QEDADSLEAR (223 aa)). ATP contacts are provided by residues Lys45, 52 to 54 (GRG), Cys94, and Glu99. Residues Asn187 and Asp201 each coordinate Mg(2+). Substrate is bound by residues Asn251 and 308 to 310 (GIT).

The protein belongs to the succinate/malate CoA ligase beta subunit family. Heterotetramer of two alpha and two beta subunits. Mg(2+) is required as a cofactor.

The enzyme catalyses succinate + ATP + CoA = succinyl-CoA + ADP + phosphate. It carries out the reaction GTP + succinate + CoA = succinyl-CoA + GDP + phosphate. It functions in the pathway carbohydrate metabolism; tricarboxylic acid cycle; succinate from succinyl-CoA (ligase route): step 1/1. In terms of biological role, succinyl-CoA synthetase functions in the citric acid cycle (TCA), coupling the hydrolysis of succinyl-CoA to the synthesis of either ATP or GTP and thus represents the only step of substrate-level phosphorylation in the TCA. The beta subunit provides nucleotide specificity of the enzyme and binds the substrate succinate, while the binding sites for coenzyme A and phosphate are found in the alpha subunit. The sequence is that of Succinate--CoA ligase [ADP-forming] subunit beta 2 from Streptomyces coelicolor (strain ATCC BAA-471 / A3(2) / M145).